We begin with the raw amino-acid sequence, 1106 residues long: Solute carrier family 12 member 7 (1106 aa).

The Cytoplasmic segment spans residues 1-143 (MVYTALTWQR…PRESKAPCMG (143 aa)). Residues 17–83 (GLVPSHLPQE…SPFIGSAAAD (67 aa)) are disordered. Phosphoserine is present on residues Ser74 and Ser86. Residues 144 to 166 (TFIGVYLPCLQNILGVILFLRLT) traverse the membrane as a discontinuously helical segment. K(+) contacts are provided by Asn155 and Ile156. Val159 is a chloride binding site. Over 167–173 (WIVGAAG) the chain is Extracellular. A helical transmembrane segment spans residues 174-196 (VLESFLVVSMCCTCTMLTAVSMS). At 197 to 220 (AIATNGVVPAGGSYYMISRSLGPE) the chain is on the cytoplasmic side. A helical membrane pass occupies residues 221-249 (FGGAVGLCFYLGTTFAGAMYILGTIEIFL). Residues 250 to 273 (TYISPGAAVFQAETPEGEAAALLH) are Extracellular-facing. 2 helical membrane passes run 274 to 295 (NMRVYGSCTLALMAVVVFVGVK) and 296 to 324 (YVNKLALVFLACVVLSILAIYAGVIKTAF). Over 325-443 (DPPDIPVCLL…PYVLSDITTY (119 aa)) the chain is Extracellular. N-linked (GlcNAc...) asparagine glycosylation is found at Asn336, Asn355, and Asn384. A helical membrane pass occupies residues 444–464 (FTVLVGIYFPSVTGIMAGSNR). The K(+) site is built by Pro453 and Thr456. Pro453 contributes to the chloride binding site. 2 residues coordinate chloride: Gly457 and Ile458. The Cytoplasmic portion of the chain corresponds to 465–474 (SGDLKDAQKS). A helical transmembrane segment spans residues 475–497 (IPTGTILAIVTTSFIYLSCIVLF). Over 498-528 (GACIEGVVLRDKFGEALQGNLVIGMLAWPSP) the chain is Extracellular. Residues 529 to 555 (WVIVIGSFFSTCGAGLQSLTGAPRLLQ) traverse the membrane as a helical segment. Residues 556–578 (AIARDGIVPFLQVFGHGKANGEP) lie on the Cytoplasmic side of the membrane. 2 helical membrane-spanning segments follow: residues 579-597 (TWALLLTALICETGILIAS) and 598-622 (LDSVAPILSMFFLMCYMFVNLACAV). Tyr613 is a binding site for chloride. Residues 623-636 (QTLLRTPNWRPRFK) are Cytoplasmic-facing. The next 2 helical transmembrane spans lie at 637–659 (YYHWTLSFLGMSLCLALMFICSW) and 660–675 (YYALFAMLIAGCIYKY). At 676–1106 (IEYRGAEKEW…GGREVITIYS (431 aa)) the chain is on the cytoplasmic side. Positions 688–704 (GIRGLSLNAARYALLRV) are scissor helix. A disordered region spans residues 980-999 (RNTASHTAASRAQAPPTPDK). Phosphothreonine occurs at positions 996 and 1003.

This sequence belongs to the SLC12A transporter family. K/Cl co-transporter subfamily. In terms of assembly, homodimer; adopts a domain-swap conformation at the scissor helices connecting the transmembrane domain and C-terminal domain. Heterodimer with K-Cl cotransporter SLC12A5. As to expression, widely expressed. Higher levels in heart, kidney and lung (at protein level).

It localises to the cell membrane. It carries out the reaction K(+)(in) + chloride(in) = K(+)(out) + chloride(out). Its activity is regulated as follows. Activated by N-ethylmaleimide (NEM). Inhibited by furosemide, DIDS and bumetanide. The inhibition is much stronger in the presence of 50 mM K(+) in the uptake medium. Inhibited by DIOA. Inhibited by WNK3. In terms of biological role, mediates electroneutral potassium-chloride cotransport when activated by cell swelling. May mediate K(+) uptake into Deiters' cells in the cochlea and contribute to K(+) recycling in the inner ear. Important for the survival of cochlear outer and inner hair cells and the maintenance of the organ of Corti. May be required for basolateral Cl(-) extrusion in the kidney and contribute to renal acidification. The protein is Solute carrier family 12 member 7 of Oryctolagus cuniculus (Rabbit).